The primary structure comprises 427 residues: GTPase ERA-like, chloroplastic (427 aa).

The transit peptide at 1 to 39 (MAVSPHISPTLSRYKFFSTSVVENPNFSPYRIYSRRRVT) directs the protein to the chloroplast. Residues 128-298 (RSGYVAVVGM…KEWILSKLPF (171 aa)) enclose the Era-type G domain. Residues 136–143 (GMPNVGKS) form a G1 region. Position 136 to 143 (136 to 143 (GMPNVGKS)) interacts with GTP. The interval 162–166 (QTTRH) is G2. The tract at residues 183–186 (DTPG) is G3. GTP-binding positions include 183 to 187 (DTPGV) and 248 to 251 (NKKD). The interval 248–251 (NKKD) is G4. The interval 277 to 279 (VSA) is G5. The KH type-2 domain maps to 329–406 (YRNEVPYACQ…FLEVEVKVKE (78 aa)).

Belongs to the TRAFAC class TrmE-Era-EngA-EngB-Septin-like GTPase superfamily. Era GTPase family.

It is found in the plastid. Its subcellular location is the chloroplast stroma. The protein localises to the chloroplast nucleoid. Its function is as follows. Nuclear genome-encoded probable GTPase involved in ribosome biogenesis in chloroplasts. Plays a role in 16S rRNA maturation in plastids and may contribute to the assembly of the small (30S) ribosomal subunit. The sequence is that of GTPase ERA-like, chloroplastic from Arabidopsis thaliana (Mouse-ear cress).